Consider the following 109-residue polypeptide: uncharacterized protein (109 aa).

The next 3 membrane-spanning stretches (helical) occupy residues 7-27 (IITI…PFFV), 37-57 (YIRY…VVYC), and 63-83 (ILTG…LGLH).

It belongs to the AzlD/HI_1737/HP1330 family.

The protein resides in the cell membrane. This is an uncharacterized protein from Haemophilus influenzae (strain ATCC 51907 / DSM 11121 / KW20 / Rd).